Consider the following 1378-residue polypeptide: Attractin-like protein 1 (1378 aa).

The N-terminal stretch at 1-51 (MEPGVRARSGAPQPASPVLWRARPAGGGGASSWLLLDGNSWLLCYGFLYLA) is a signal peptide. The EGF-like 1 domain maps to 52–90 (LYAQVSQSKPCERTGSCFSGRCVNSTCLCDPGWVGDQCQ). Over 52–1229 (LYAQVSQSKP…FSQHNTIMDL (1178 aa)) the chain is Extracellular. Intrachain disulfides connect C62–C78, C80–C89, and C92–C118. A glycan (N-linked (GlcNAc...) asparagine) is linked at N75. A CUB domain is found at 92-208 (CQGRFKLTEP…TGFNIFYSIN (117 aa)). N-linked (GlcNAc...) asparagine glycosylation is found at N173 and N197. In terms of domain architecture, EGF-like 2 spans 206–244 (SINSCPNNCSGHGKCTTSVSVASQVYCECDKYWKGEACD). Intrachain disulfides connect C210–C220, C214–C232, and C234–C243. Kelch repeat units lie at residues 315 to 364 (FMWV…LYQE), 366 to 414 (IFMY…EGHS), 426 to 474 (VMIV…SVYD), 479 to 530 (SIYV…LING), 532 to 590 (MLIF…VING), and 591 to 637 (SMYI…WNKN). A glycan (N-linked (GlcNAc...) asparagine) is linked at N379. PSI domains lie at 613-656 (NCKA…AKCP), 665-708 (RCYR…TKCH), and 714-759 (ICNK…DACL). Residue N703 is glycosylated (N-linked (GlcNAc...) asparagine). A C-type lectin domain is found at 754–872 (VGDACLRINS…TSMADGLVCE (119 aa)). A disulfide bridge links C775 with C871. 2 N-linked (GlcNAc...) asparagine glycosylation sites follow: N777 and N897. PSI domains are found at residues 888 to 938 (PCSL…ATCS) and 941 to 1011 (NCSG…IQCP). Disulfide bonds link C1013/C1021, C1015/C1027, C1030/C1039, C1042/C1056, C1059/C1068, C1061/C1075, C1077/C1087, and C1090/C1105. Laminin EGF-like domains lie at 1013-1058 (CQCN…QCTA) and 1059-1107 (CTCG…TCYY). The N-linked (GlcNAc...) asparagine glycan is linked to N1156. The helical transmembrane segment at 1230–1250 (VQFFVTFFSCFLSLLLVAAVV) threads the bilayer. Over 1251–1378 (WKIKQTCWAS…HLSTRQGTCV (128 aa)) the chain is Cytoplasmic. Residues 1287–1324 (VGAEQTDFLRGPLEGAPKPIAIEPCAGNRAAVLTVFLC) are interaction with MC4R. Positions 1351–1378 (QQKPSDNKDKTSGVRNRKHLSTRQGTCV) are disordered.

In terms of assembly, interacts with MC4R. Highly expressed in brain, heart, lung, kidney and liver. In the central nervous system, it is highly expressed in the dentate gyrus, CA1-3 regions of the hippocampus, and the ventral taenia tecta.

The protein resides in the cell membrane. May play a role in melanocortin signaling pathways that regulate energy homeostasis. This chain is Attractin-like protein 1 (Atrnl1), found in Mus musculus (Mouse).